A 201-amino-acid polypeptide reads, in one-letter code: Recombination protein RecR (201 aa).

The C4-type zinc finger occupies 57–72 (CADCRTFTEQEVCNIC). The 96-residue stretch at 81 to 176 (GQICVVESPA…EASRIAHGVP (96 aa)) folds into the Toprim domain.

Belongs to the RecR family.

Its function is as follows. May play a role in DNA repair. It seems to be involved in an RecBC-independent recombinational process of DNA repair. It may act with RecF and RecO. The sequence is that of Recombination protein RecR from Salmonella arizonae (strain ATCC BAA-731 / CDC346-86 / RSK2980).